Here is a 568-residue protein sequence, read N- to C-terminus: MKQSKTFIPTLREVPADAEVKSHKQLLRAGFIRQNTSGVYSYLPLAKRVLSKIETIIREEMEAINSIELLMPSLQSAELWQESGRWEKYGPELMRLKDRHDRDFALGPTHEEVITTLVRDEIKSYKKLPLTLYQIQTKFRDEKRPRFGLLRGREFIMKDAYSFHASRESLDETYDDMYRAYSNIFSRLGLNYRAVIADAGSIGGKGTHEFMVLSEIGEDTIAYSDTSDYAANIEMAEVIADYQTSDEALKEVEKVATPDQKTIEEVSAFLQVKPAHVIKSLVFDVDGELVVVLARGDHEINDIKLKNALEAGSVELASEAAIRELLGCGVGSIGPVKLPVDVKVVADHAIKSIRNGIAGANEDGFHLVNVNPERDFAVNDYLDIRFIQEGDPSPDGQGTIKFAEGIEVGHIFKLGTTYSAKMNGTFLDEQGKSQPFIMGCYGIGVSRILAAVAEHFQDENGFTWPTQLAPYDIHVVPVNTKDEVQVALADELYGLLKSYRYDVLLDDRAERAGVKFADADLIGLPVRVTVGKKATEGIVEVKFRQTGETFEWKKEEVIDRLNEFFRKN.

Belongs to the class-II aminoacyl-tRNA synthetase family. ProS type 1 subfamily. In terms of assembly, homodimer.

The protein localises to the cytoplasm. It carries out the reaction tRNA(Pro) + L-proline + ATP = L-prolyl-tRNA(Pro) + AMP + diphosphate. In terms of biological role, catalyzes the attachment of proline to tRNA(Pro) in a two-step reaction: proline is first activated by ATP to form Pro-AMP and then transferred to the acceptor end of tRNA(Pro). As ProRS can inadvertently accommodate and process non-cognate amino acids such as alanine and cysteine, to avoid such errors it has two additional distinct editing activities against alanine. One activity is designated as 'pretransfer' editing and involves the tRNA(Pro)-independent hydrolysis of activated Ala-AMP. The other activity is designated 'posttransfer' editing and involves deacylation of mischarged Ala-tRNA(Pro). The misacylated Cys-tRNA(Pro) is not edited by ProRS. In Lysinibacillus sphaericus (strain C3-41), this protein is Proline--tRNA ligase.